The following is a 196-amino-acid chain: Pyridoxal 5'-phosphate synthase subunit PdxT (196 aa).

Position 47–49 (47–49 (GES)) interacts with L-glutamine. Cys-79 (nucleophile) is an active-site residue. L-glutamine contacts are provided by residues Arg-106 and 134 to 135 (IR). Catalysis depends on charge relay system residues His-170 and Glu-172.

Belongs to the glutaminase PdxT/SNO family. In the presence of PdxS, forms a dodecamer of heterodimers. Only shows activity in the heterodimer.

It carries out the reaction aldehydo-D-ribose 5-phosphate + D-glyceraldehyde 3-phosphate + L-glutamine = pyridoxal 5'-phosphate + L-glutamate + phosphate + 3 H2O + H(+). The enzyme catalyses L-glutamine + H2O = L-glutamate + NH4(+). Its pathway is cofactor biosynthesis; pyridoxal 5'-phosphate biosynthesis. In terms of biological role, catalyzes the hydrolysis of glutamine to glutamate and ammonia as part of the biosynthesis of pyridoxal 5'-phosphate. The resulting ammonia molecule is channeled to the active site of PdxS. This chain is Pyridoxal 5'-phosphate synthase subunit PdxT, found in Bacillus mycoides (strain KBAB4) (Bacillus weihenstephanensis).